A 120-amino-acid polypeptide reads, in one-letter code: Small ribosomal subunit protein uS13 (120 aa).

The interval 96–120 (PCRGQRTRTNARTRKGPRKAIAGKK) is disordered.

Belongs to the universal ribosomal protein uS13 family. As to quaternary structure, part of the 30S ribosomal subunit. Forms a loose heterodimer with protein S19. Forms two bridges to the 50S subunit in the 70S ribosome.

Its function is as follows. Located at the top of the head of the 30S subunit, it contacts several helices of the 16S rRNA. In the 70S ribosome it contacts the 23S rRNA (bridge B1a) and protein L5 of the 50S subunit (bridge B1b), connecting the 2 subunits; these bridges are implicated in subunit movement. Contacts the tRNAs in the A and P-sites. In Dechloromonas aromatica (strain RCB), this protein is Small ribosomal subunit protein uS13.